The sequence spans 359 residues: Popy class I histocompatibility antigen, alpha chain E (359 aa).

The N-terminal stretch at 1 to 18 (GTLLLLLSEALALTETWA) is a signal peptide. Residues 19 to 108 (GSHSLKYFHT…LRGYYNQTEA (90 aa)) are alpha-1. The Extracellular segment spans residues 19 to 302 (GSHSLKYFHT…EPASQTTIPI (284 aa)). An N-linked (GlcNAc...) asparagine glycan is attached at asparagine 104. Residues 109–200 (GSHTLQWMHG…EKGKETLLHL (92 aa)) form an alpha-2 region. Disulfide bonds link cysteine 119/cysteine 182 and cysteine 221/cysteine 277. An alpha-3 region spans residues 201–292 (DPPKTHVTHH…GLPEPLTLRW (92 aa)). The Ig-like C1-type domain occupies 203-291 (PKTHVTHHRI…EGLPEPLTLR (89 aa)). The connecting peptide stretch occupies residues 293–302 (EPASQTTIPI). A helical membrane pass occupies residues 303 to 326 (VGIFAGLVLLGAVVTGATVVAAVM). Topologically, residues 327-359 (WRKKSSGGKGGSYSKAEWSDSAQGSESLTACKA) are cytoplasmic. Residues 330–359 (KSSGGKGGSYSKAEWSDSAQGSESLTACKA) are disordered. The span at 346–359 (DSAQGSESLTACKA) shows a compositional bias: polar residues. Serine 351 is modified (phosphoserine).

Belongs to the MHC class I family. In terms of assembly, heterodimer of an alpha chain and a beta chain (beta-2-microglobulin).

The protein localises to the membrane. Functionally, involved in the presentation of foreign antigens to the immune system. The polypeptide is Popy class I histocompatibility antigen, alpha chain E (Popy-E) (Pongo pygmaeus (Bornean orangutan)).